We begin with the raw amino-acid sequence, 564 residues long: Proline--tRNA ligase (564 aa).

This sequence belongs to the class-II aminoacyl-tRNA synthetase family. ProS type 1 subfamily. Homodimer.

It localises to the cytoplasm. The catalysed reaction is tRNA(Pro) + L-proline + ATP = L-prolyl-tRNA(Pro) + AMP + diphosphate. Catalyzes the attachment of proline to tRNA(Pro) in a two-step reaction: proline is first activated by ATP to form Pro-AMP and then transferred to the acceptor end of tRNA(Pro). As ProRS can inadvertently accommodate and process non-cognate amino acids such as alanine and cysteine, to avoid such errors it has two additional distinct editing activities against alanine. One activity is designated as 'pretransfer' editing and involves the tRNA(Pro)-independent hydrolysis of activated Ala-AMP. The other activity is designated 'posttransfer' editing and involves deacylation of mischarged Ala-tRNA(Pro). The misacylated Cys-tRNA(Pro) is not edited by ProRS. The polypeptide is Proline--tRNA ligase (Xylella fastidiosa (strain M12)).